The sequence spans 429 residues: Probable M18 family aminopeptidase 2 (429 aa).

Residues histidine 82, histidine 156, and histidine 401 each coordinate Zn(2+).

This sequence belongs to the peptidase M18 family. It depends on Zn(2+) as a cofactor.

The protein is Probable M18 family aminopeptidase 2 of Azotobacter vinelandii (strain DJ / ATCC BAA-1303).